The sequence spans 280 residues: Dimethylglycine N-methyltransferase (280 aa).

Belongs to the methyltransferase superfamily. Monomer.

It catalyses the reaction N,N-dimethylglycine + S-adenosyl-L-methionine = glycine betaine + S-adenosyl-L-homocysteine + H(+). It participates in amine and polyamine biosynthesis; betaine biosynthesis via glycine pathway; betaine from glycine: step 3/3. In terms of biological role, catalyzes the methylation of dimethylglycine to betaine with S-adenosylmethionine (AdoMet) acting as the methyl donor. It has strict specificity for dimethylglycine as the methyl group acceptors. This Parasynechococcus marenigrum (strain WH8102) protein is Dimethylglycine N-methyltransferase.